We begin with the raw amino-acid sequence, 108 residues long: Cytochrome c-555 (108 aa).

The signal sequence occupies residues 1–22 (MSRFVSAALVGAALLVSGNAFA). 4 residues coordinate heme c: cysteine 36, cysteine 39, histidine 40, and methionine 82.

Post-translationally, binds 1 heme c group covalently per subunit.

Its function is as follows. This basic c-type monoheme cytochrome has been found exclusively in the green photosynthetic bacteria, although its role in bacterial photosynthesis is not established. It has an unusually low redox potential compared with mitochondrial cytochrome c. It is reactive with cytochrome c oxidases but not with reductases. The chain is Cytochrome c-555 from Chlorobaculum tepidum (strain ATCC 49652 / DSM 12025 / NBRC 103806 / TLS) (Chlorobium tepidum).